A 250-amino-acid polypeptide reads, in one-letter code: mRNA-decapping protein g5R (250 aa).

The 143-residue stretch at 97 to 239 (QKFRKNWLLP…NLEPMIGPAF (143 aa)) folds into the Nudix hydrolase domain. The short motif at 132 to 153 (GKPKEDESDLTCAIREFEEETG) is the Nudix box element. Glu-138 is a Mg(2+) binding site. Residue Glu-147 is the Nucleophile of the active site. Residues Glu-151 and Asp-173 each contribute to the Mg(2+) site.

This sequence belongs to the Nudix hydrolase family. DIPP subfamily. Interacts with host RPL23A. Mg(2+) serves as cofactor. Requires Mn(2+) as cofactor.

It localises to the host rough endoplasmic reticulum. It catalyses the reaction diphospho-myo-inositol polyphosphate + H2O = myo-inositol polyphosphate + phosphate.. Decapping enzyme required for the removal of the 5'-end m7GpppN cap tethered to viral and host mRNAs to allow their decay in cells. May therefore accelerate viral and cellular mRNA turnover to eliminate competing host mRNAs and allow stage-specific synthesis of viral proteins. Acceleration of the turnover of cellular transcripts may even promote the shutoff of host protein synthesis. In addition to the mRNA cap, g5R also efficiently hydrolyzes diphosphoinositol polyphosphates. Down-regulation of the level of PP-InsP5 (diphosphoinositol pentakisphosphate) may play a role in viral manipulation of the cellular secretory pathway, a step necessary for the formation of virions. Binds viral and cellular poly(A) mRNAs, thereby decreasing both types of mRNAs. This Ornithodoros (relapsing fever ticks) protein is mRNA-decapping protein g5R.